The chain runs to 166 residues: Phosphopantetheine adenylyltransferase (166 aa).

Ser-11 is a substrate binding site. Residues 11-12 (SF) and His-19 contribute to the ATP site. Lys-43, Ala-76, and Arg-90 together coordinate substrate. Residues 91–93 (GLR), Glu-101, and 126–132 (LQPISSS) contribute to the ATP site.

The protein belongs to the bacterial CoaD family. As to quaternary structure, homohexamer. Requires Mg(2+) as cofactor.

Its subcellular location is the cytoplasm. It carries out the reaction (R)-4'-phosphopantetheine + ATP + H(+) = 3'-dephospho-CoA + diphosphate. Its pathway is cofactor biosynthesis; coenzyme A biosynthesis; CoA from (R)-pantothenate: step 4/5. Its function is as follows. Reversibly transfers an adenylyl group from ATP to 4'-phosphopantetheine, yielding dephospho-CoA (dPCoA) and pyrophosphate. The sequence is that of Phosphopantetheine adenylyltransferase from Streptococcus equi subsp. zooepidemicus (strain MGCS10565).